A 341-amino-acid polypeptide reads, in one-letter code: Anthranilate phosphoribosyltransferase (341 aa).

Residues Gly79, Gly82 to Asp83, Thr87, Asn89 to Thr92, Lys107 to Ser115, and Ser119 contribute to the 5-phospho-alpha-D-ribose 1-diphosphate site. Anthranilate is bound at residue Gly79. Ser91 lines the Mg(2+) pocket. Asn110 is an anthranilate binding site. An anthranilate-binding site is contributed by Arg164. Mg(2+) contacts are provided by Asp222 and Glu223.

It belongs to the anthranilate phosphoribosyltransferase family. Homodimer. The cofactor is Mg(2+).

The catalysed reaction is N-(5-phospho-beta-D-ribosyl)anthranilate + diphosphate = 5-phospho-alpha-D-ribose 1-diphosphate + anthranilate. Its pathway is amino-acid biosynthesis; L-tryptophan biosynthesis; L-tryptophan from chorismate: step 2/5. In terms of biological role, catalyzes the transfer of the phosphoribosyl group of 5-phosphorylribose-1-pyrophosphate (PRPP) to anthranilate to yield N-(5'-phosphoribosyl)-anthranilate (PRA). The sequence is that of Anthranilate phosphoribosyltransferase from Blochmanniella pennsylvanica (strain BPEN).